The chain runs to 23 residues: uncharacterized protein (23 aa).

A helical membrane pass occupies residues 3–23; sequence YFFMGISFMVIVWAGTFALMI.

The protein localises to the cell inner membrane. This is an uncharacterized protein from Escherichia coli (strain K12).